Reading from the N-terminus, the 217-residue chain is Polyadenylate-binding protein 3 (217 aa).

Positions Met-1 to Met-28 are disordered. Residues Glu-15 to Met-28 are compositionally biased toward acidic residues. A coiled-coil region spans residues Ala-30–Gln-71. The segment at Ser-75 to Tyr-216 is necessary for homooligomerization. The 77-residue stretch at Arg-89–Thr-165 folds into the RRM domain. The short motif at Pro-162–Gly-169 is the Nuclear localization signal element.

Monomer and homooligomer. Binds RNA as a monomer and oligomerizes when bound to poly(A). Forms a complex with cleavage and polyadenylation specificity factor (CPSF) subunits PAPS4, PABN1, PABN2, CSTF50 and FIPS5. Interacts with CSP3.

It localises to the nucleus speckle. The protein localises to the cytoplasm. Its function is as follows. Involved in the 3'-end formation of mRNA precursors (pre-mRNA) by the addition of a poly(A) tail of 200-250 nt to the upstream cleavage product. Stimulates poly(A) polymerase (PAPOLA) conferring processivity on the poly(A) tail elongation reaction and also controls the poly(A) tail length. Increases the affinity of poly(A) polymerase for RNA. Binds to poly(A) and to poly(G) with high affinity. May protect the poly(A) tail from degradation. This Arabidopsis thaliana (Mouse-ear cress) protein is Polyadenylate-binding protein 3.